Reading from the N-terminus, the 397-residue chain is Arginine biosynthesis bifunctional protein ArgJ (397 aa).

Substrate-binding residues include threonine 147, lysine 173, threonine 184, glutamate 270, asparagine 392, and threonine 397. Threonine 184 acts as the Nucleophile in catalysis.

It belongs to the ArgJ family. Heterotetramer of two alpha and two beta chains.

It localises to the cytoplasm. It catalyses the reaction N(2)-acetyl-L-ornithine + L-glutamate = N-acetyl-L-glutamate + L-ornithine. The catalysed reaction is L-glutamate + acetyl-CoA = N-acetyl-L-glutamate + CoA + H(+). It functions in the pathway amino-acid biosynthesis; L-arginine biosynthesis; L-ornithine and N-acetyl-L-glutamate from L-glutamate and N(2)-acetyl-L-ornithine (cyclic): step 1/1. The protein operates within amino-acid biosynthesis; L-arginine biosynthesis; N(2)-acetyl-L-ornithine from L-glutamate: step 1/4. Functionally, catalyzes two activities which are involved in the cyclic version of arginine biosynthesis: the synthesis of N-acetylglutamate from glutamate and acetyl-CoA as the acetyl donor, and of ornithine by transacetylation between N(2)-acetylornithine and glutamate. This chain is Arginine biosynthesis bifunctional protein ArgJ, found in Streptococcus thermophilus (strain ATCC BAA-250 / LMG 18311).